Here is a 605-residue protein sequence, read N- to C-terminus: UvrABC system protein C (605 aa).

The GIY-YIG domain maps to 14–92 (QSCGVYKMIG…IKSLKPSYNI (79 aa)). In terms of domain architecture, UVR spans 202-237 (KEVQRQLFSTMEKCSREMNYELAAVYRDRLKFLQQI).

This sequence belongs to the UvrC family. As to quaternary structure, interacts with UvrB in an incision complex.

It localises to the cytoplasm. In terms of biological role, the UvrABC repair system catalyzes the recognition and processing of DNA lesions. UvrC both incises the 5' and 3' sides of the lesion. The N-terminal half is responsible for the 3' incision and the C-terminal half is responsible for the 5' incision. The protein is UvrABC system protein C of Wolbachia pipientis subsp. Culex pipiens (strain wPip).